Reading from the N-terminus, the 135-residue chain is MPPKTRSQTGAKKVRRKEKKNVAHGHAHIKSTFNNTIVSITDPSGAVIAWASAGQVGFKGSRKSTPFAAQMTAEAAARRAQEHGMRKVDVFVKGPGSGRETAIRSLQAVGLEVGSIQDVTPVPHNGCRPPKRRRV.

Over residues 1–10 (MPPKTRSQTG) the composition is skewed to polar residues. A disordered region spans residues 1–28 (MPPKTRSQTGAKKVRRKEKKNVAHGHAH). Residues 12–28 (KKVRRKEKKNVAHGHAH) are compositionally biased toward basic residues.

It belongs to the universal ribosomal protein uS11 family. Part of the 30S ribosomal subunit. Interacts with proteins S7 and S18. Binds to IF-3.

Functionally, located on the platform of the 30S subunit, it bridges several disparate RNA helices of the 16S rRNA. Forms part of the Shine-Dalgarno cleft in the 70S ribosome. This is Small ribosomal subunit protein uS11 from Acidothermus cellulolyticus (strain ATCC 43068 / DSM 8971 / 11B).